We begin with the raw amino-acid sequence, 263 residues long: Hydroxyacylglutathione hydrolase (263 aa).

H55, H57, D59, H60, H117, D134, and H172 together coordinate Zn(2+).

This sequence belongs to the metallo-beta-lactamase superfamily. Glyoxalase II family. Monomer. Zn(2+) serves as cofactor.

It catalyses the reaction an S-(2-hydroxyacyl)glutathione + H2O = a 2-hydroxy carboxylate + glutathione + H(+). It functions in the pathway secondary metabolite metabolism; methylglyoxal degradation; (R)-lactate from methylglyoxal: step 2/2. Functionally, thiolesterase that catalyzes the hydrolysis of S-D-lactoyl-glutathione to form glutathione and D-lactic acid. The protein is Hydroxyacylglutathione hydrolase of Shewanella baltica (strain OS185).